The sequence spans 367 residues: tRNA/tmRNA (uracil-C(5))-methyltransferase (367 aa).

The S-adenosyl-L-methionine site is built by glutamine 190, tyrosine 218, asparagine 223, glutamate 239, and aspartate 299. Cysteine 324 (nucleophile) is an active-site residue. Glutamate 358 (proton acceptor) is an active-site residue.

The protein belongs to the class I-like SAM-binding methyltransferase superfamily. RNA M5U methyltransferase family. TrmA subfamily.

It carries out the reaction uridine(54) in tRNA + S-adenosyl-L-methionine = 5-methyluridine(54) in tRNA + S-adenosyl-L-homocysteine + H(+). The enzyme catalyses uridine(341) in tmRNA + S-adenosyl-L-methionine = 5-methyluridine(341) in tmRNA + S-adenosyl-L-homocysteine + H(+). Its function is as follows. Dual-specificity methyltransferase that catalyzes the formation of 5-methyluridine at position 54 (m5U54) in all tRNAs, and that of position 341 (m5U341) in tmRNA (transfer-mRNA). The chain is tRNA/tmRNA (uracil-C(5))-methyltransferase from Dickeya chrysanthemi (strain Ech1591) (Dickeya zeae (strain Ech1591)).